The following is a 482-amino-acid chain: Lipoamide acyltransferase component of branched-chain alpha-keto acid dehydrogenase complex, mitochondrial (482 aa).

The transit peptide at 1-61 (MAAVRMLRTW…HFLKTTAALR (61 aa)) directs the protein to the mitochondrion. The Lipoyl-binding domain maps to 64–139 (VVQFKLSDIG…YVGKPLVDIE (76 aa)). Lys105 is modified (N6-lipoyllysine). Residue Lys133 is modified to N6-succinyllysine. The interval 145 to 160 (DSEEDVVETPAVSHDE) is critical for association with PPM1K. Residues 147-168 (EEDVVETPAVSHDEHTHQEIKG) form a disordered region. Over residues 157–168 (SHDEHTHQEIKG) the composition is skewed to basic and acidic residues. The Peripheral subunit-binding (PSBD) domain maps to 172–209 (LATPAVRRLAMENNIKLSEVVGSGKDGRILKEDILNYL). Residue Lys196 is modified to N6-acetyllysine; alternate. Residue Lys196 is modified to N6-succinyllysine; alternate. The residue at position 202 (Lys202) is an N6-acetyllysine. A Phosphoserine modification is found at Ser220. N6-acetyllysine is present on residues Lys243 and Lys250. At Lys261 the chain carries N6-succinyllysine. Lys289 is modified (N6-acetyllysine; alternate). Lys289 carries the post-translational modification N6-succinyllysine; alternate. Arg291 contributes to the CoA binding site. N6-acetyllysine is present on residues Lys295 and Lys304. Residues Ser306, Asp349, Gln378, Ser399, Asn400, Ser403, Gly424, and Ile426 each coordinate CoA. Lys435 carries the post-translational modification N6-acetyllysine. Position 440 is an N6-acetyllysine; alternate (Lys440). Position 440 is an N6-succinyllysine; alternate (Lys440). Active-site residues include His452 and Asp456.

This sequence belongs to the 2-oxoacid dehydrogenase family. Forms a 24-polypeptide structural core with octahedral symmetry that represents the E2 component of the branched-chain alpha-ketoacid dehydrogenase (BCKDH) complex. The BCKDH complex is composed of three major building blocks E1, E2 and E3. It is organized around E2, a 24-meric cubic core composed of DBT, to which are associated 6 to 12 copies of E1, and approximately 6 copies of the dehydrogenase E3, a DLD dimer. Interacts with PPM1K with a 24:1 stoichiometry; the N-terminal region (residues 49-61) of PPM1K and C-terminal linker of the lipoyl domain of DBT/E2 (residues 145-160) are critical for this interaction whereas the lipoyl prosthetic group is dispensable. This interaction requires colocalization in mitochondria. PPM1K competes with BCKDK for binding to DBT; this interaction is modulated by branched-chain alpha-keto acids (BCKAs). At steady state, BCKDH holoenzyme preferentially binds BCKDK and BCKDHA is phosphorylated. In response to high levels of BCKAs, BCKDK is replaced by PPM1K leading to BCKDHA dephosphorylation. (R)-lipoate is required as a cofactor.

It is found in the mitochondrion matrix. It catalyses the reaction N(6)-[(R)-dihydrolipoyl]-L-lysyl-[protein] + 2-methylpropanoyl-CoA = N(6)-[(R)-S(8)-2-methylpropanoyldihydrolipoyl]-L-lysyl-[protein] + CoA. Functionally, the branched-chain alpha-keto dehydrogenase complex catalyzes the overall conversion of alpha-keto acids to acyl-CoA and CO(2). It contains multiple copies of three enzymatic components: branched-chain alpha-keto acid decarboxylase (E1), lipoamide acyltransferase (E2) and lipoamide dehydrogenase (E3). Within this complex, the catalytic function of this enzyme is to accept, and to transfer to coenzyme A, acyl groups that are generated by the branched-chain alpha-keto acid decarboxylase component. The sequence is that of Lipoamide acyltransferase component of branched-chain alpha-keto acid dehydrogenase complex, mitochondrial from Homo sapiens (Human).